Consider the following 481-residue polypeptide: GTPase Der (481 aa).

EngA-type G domains lie at 47–210 (PVLA…PDVS) and 221–394 (RRVA…ESWE). GTP is bound by residues 53 to 60 (GRPNVGKS), 100 to 104 (DTGGW), 162 to 165 (NKVD), 227 to 234 (GRPNVGKS), 274 to 278 (DTAGI), and 339 to 342 (NKWD). The KH-like domain occupies 395 to 477 (TRIPTGKFNA…PIVLNMRVRE (83 aa)).

It belongs to the TRAFAC class TrmE-Era-EngA-EngB-Septin-like GTPase superfamily. EngA (Der) GTPase family. Associates with the 50S ribosomal subunit.

Its function is as follows. GTPase that plays an essential role in the late steps of ribosome biogenesis. This chain is GTPase Der, found in Leifsonia xyli subsp. xyli (strain CTCB07).